We begin with the raw amino-acid sequence, 85 residues long: Large ribosomal subunit protein bL27 (85 aa).

The disordered stretch occupies residues 1–20; sequence MAHKKAGGSTRNGRDSEAKR.

This sequence belongs to the bacterial ribosomal protein bL27 family.

The protein is Large ribosomal subunit protein bL27 of Enterobacter sp. (strain 638).